A 465-amino-acid polypeptide reads, in one-letter code: Mitochondrial F-box protein MFB1 (465 aa).

The F-box domain occupies 14–60 (ERSLTNLPLNLLFRILSHLDMNDLQNIGKTCTLLRMLANENIVYRNA). The disordered stretch occupies residues 253 to 279 (FTKSRDPDYKEMTPTSTESSDSITRLR). The span at 254–263 (TKSRDPDYKE) shows a compositional bias: basic and acidic residues. Residues 265–275 (TPTSTESSDSI) are compositionally biased toward polar residues.

The protein localises to the mitochondrion. This chain is Mitochondrial F-box protein MFB1 (MFB1), found in Saccharomyces cerevisiae (strain ATCC 204508 / S288c) (Baker's yeast).